The chain runs to 113 residues: Biotrophy-associated secreted protein 3 (113 aa).

The first 20 residues, 1-20 (MQFSTVSFAIFAILPAMVAA), serve as a signal peptide directing secretion.

Its subcellular location is the secreted. In terms of biological role, secreted effector involved in biotrophic colonization of plant cells. This Pyricularia oryzae (strain 70-15 / ATCC MYA-4617 / FGSC 8958) (Rice blast fungus) protein is Biotrophy-associated secreted protein 3.